Reading from the N-terminus, the 575-residue chain is uncharacterized protein (575 aa).

Residues 507-536 are disordered; sequence AHRKVGELNNKKPMTGEKPPPKNKKSPKYK.

This is an uncharacterized protein from Ostreid herpesvirus 1 (isolate France) (OsHV-1).